Here is a 171-residue protein sequence, read N- to C-terminus: Small ribosomal subunit protein bS16 (171 aa).

The disordered stretch occupies residues 114–171; sequence EGGPTTEAAKPKKKAATSGAKKAAKAAEPEAAASEAAEPEAAAAPAEGGEQAESSAES. Residues 142–171 show a composition bias toward low complexity; the sequence is PEAAASEAAEPEAAAAPAEGGEQAESSAES.

Belongs to the bacterial ribosomal protein bS16 family.

This chain is Small ribosomal subunit protein bS16, found in Mycolicibacterium paratuberculosis (strain ATCC BAA-968 / K-10) (Mycobacterium paratuberculosis).